We begin with the raw amino-acid sequence, 151 residues long: Ribosome maturation factor RimP (151 aa).

It belongs to the RimP family.

Its subcellular location is the cytoplasm. In terms of biological role, required for maturation of 30S ribosomal subunits. This chain is Ribosome maturation factor RimP, found in Caldanaerobacter subterraneus subsp. tengcongensis (strain DSM 15242 / JCM 11007 / NBRC 100824 / MB4) (Thermoanaerobacter tengcongensis).